A 202-amino-acid chain; its full sequence is Pyridoxal 5'-phosphate synthase subunit PdxT (202 aa).

Position 52–54 (52–54) interacts with L-glutamine; the sequence is GES. The active-site Nucleophile is the Cys-84. Residues Arg-116 and 143-144 each bind L-glutamine; that span reads IR. Residues His-184 and Glu-186 each act as charge relay system in the active site.

It belongs to the glutaminase PdxT/SNO family. In terms of assembly, in the presence of PdxS, forms a dodecamer of heterodimers. Only shows activity in the heterodimer.

The catalysed reaction is aldehydo-D-ribose 5-phosphate + D-glyceraldehyde 3-phosphate + L-glutamine = pyridoxal 5'-phosphate + L-glutamate + phosphate + 3 H2O + H(+). It catalyses the reaction L-glutamine + H2O = L-glutamate + NH4(+). It functions in the pathway cofactor biosynthesis; pyridoxal 5'-phosphate biosynthesis. In terms of biological role, catalyzes the hydrolysis of glutamine to glutamate and ammonia as part of the biosynthesis of pyridoxal 5'-phosphate. The resulting ammonia molecule is channeled to the active site of PdxS. The chain is Pyridoxal 5'-phosphate synthase subunit PdxT from Pyrobaculum neutrophilum (strain DSM 2338 / JCM 9278 / NBRC 100436 / V24Sta) (Thermoproteus neutrophilus).